We begin with the raw amino-acid sequence, 259 residues long: Proteasome subunit alpha (259 aa).

A disordered region spans residues 226 to 259 (LAEGSATSATSATPGEAEAPATAPEGDVDTGSNG). Low complexity predominate over residues 227-250 (AEGSATSATSATPGEAEAPATAPE).

The protein belongs to the peptidase T1A family. As to quaternary structure, the 20S proteasome core is composed of 14 alpha and 14 beta subunits that assemble into four stacked heptameric rings, resulting in a barrel-shaped structure. The two inner rings, each composed of seven catalytic beta subunits, are sandwiched by two outer rings, each composed of seven alpha subunits. The catalytic chamber with the active sites is on the inside of the barrel. Has a gated structure, the ends of the cylinder being occluded by the N-termini of the alpha-subunits. Is capped by the proteasome-associated ATPase, ARC.

The protein resides in the cytoplasm. It functions in the pathway protein degradation; proteasomal Pup-dependent pathway. The formation of the proteasomal ATPase ARC-20S proteasome complex, likely via the docking of the C-termini of ARC into the intersubunit pockets in the alpha-rings, may trigger opening of the gate for substrate entry. Interconversion between the open-gate and close-gate conformations leads to a dynamic regulation of the 20S proteasome proteolysis activity. Its function is as follows. Component of the proteasome core, a large protease complex with broad specificity involved in protein degradation. This Streptosporangium roseum (strain ATCC 12428 / DSM 43021 / JCM 3005 / KCTC 9067 / NCIMB 10171 / NRRL 2505 / NI 9100) protein is Proteasome subunit alpha.